Consider the following 240-residue polypeptide: Phosphoribosylaminoimidazole-succinocarboxamide synthase (240 aa).

The protein belongs to the SAICAR synthetase family.

It carries out the reaction 5-amino-1-(5-phospho-D-ribosyl)imidazole-4-carboxylate + L-aspartate + ATP = (2S)-2-[5-amino-1-(5-phospho-beta-D-ribosyl)imidazole-4-carboxamido]succinate + ADP + phosphate + 2 H(+). Its pathway is purine metabolism; IMP biosynthesis via de novo pathway; 5-amino-1-(5-phospho-D-ribosyl)imidazole-4-carboxamide from 5-amino-1-(5-phospho-D-ribosyl)imidazole-4-carboxylate: step 1/2. In Wigglesworthia glossinidia brevipalpis, this protein is Phosphoribosylaminoimidazole-succinocarboxamide synthase.